Reading from the N-terminus, the 173-residue chain is NADH-ubiquinone oxidoreductase chain 6 (173 aa).

Transmembrane regions (helical) follow at residues 1–21 (MTYFMFLLLMALVVGLVAVAS), 25–45 (PYFAALGLVVAAGVGCGVLVG), 53–73 (LVLFLIYLGGMLVVFAYSAAL), 87–107 (VLGYVLVYLLGVGLVAGFFWG), and 141–161 (GGMLVICAWVLLLTLLVVLEL).

It belongs to the complex I subunit 6 family.

Its subcellular location is the mitochondrion membrane. It carries out the reaction a ubiquinone + NADH + 5 H(+)(in) = a ubiquinol + NAD(+) + 4 H(+)(out). Core subunit of the mitochondrial membrane respiratory chain NADH dehydrogenase (Complex I) that is believed to belong to the minimal assembly required for catalysis. Complex I functions in the transfer of electrons from NADH to the respiratory chain. The immediate electron acceptor for the enzyme is believed to be ubiquinone. This is NADH-ubiquinone oxidoreductase chain 6 (MT-ND6) from Carassius auratus (Goldfish).